The sequence spans 382 residues: Small ribosomal subunit protein mS35 (382 aa).

Residues 363–375 (GRGGKALPGGKGG) show a composition bias toward gly residues. A disordered region spans residues 363 to 382 (GRGGKALPGGKGGKMQRSKR).

Belongs to the mitochondrion-specific ribosomal protein mS35 family. Component of the mitochondrial small ribosomal subunit (mt-SSU). Mature N.crassa 74S mitochondrial ribosomes consist of a small (37S) and a large (54S) subunit. The 37S small subunit contains a 16S ribosomal RNA (16S mt-rRNA) and 32 different proteins. The 54S large subunit contains a 23S rRNA (23S mt-rRNA) and 42 different proteins.

The protein resides in the mitochondrion. Component of the mitochondrial ribosome (mitoribosome), a dedicated translation machinery responsible for the synthesis of mitochondrial genome-encoded proteins, including at least some of the essential transmembrane subunits of the mitochondrial respiratory chain. The mitoribosomes are attached to the mitochondrial inner membrane and translation products are cotranslationally integrated into the membrane. The polypeptide is Small ribosomal subunit protein mS35 (rsm24) (Neurospora crassa (strain ATCC 24698 / 74-OR23-1A / CBS 708.71 / DSM 1257 / FGSC 987)).